A 302-amino-acid polypeptide reads, in one-letter code: Putative RING-H2 finger protein ATL35 (302 aa).

A signal peptide spans 1 to 31 (MTIFARDLIYRIETKVLLPLFLVHLLPYVTC). A helical membrane pass occupies residues 50-70 (TVIAIIVLAIFISLSMVACFL). The RING-type; atypical zinc finger occupies 123 to 165 (CAICLSEFVDKETLRWMPPCSHTFHANCIDVWLSSQSTCPACR). Phosphoserine is present on Ser-226.

It belongs to the RING-type zinc finger family. ATL subfamily.

It localises to the membrane. It carries out the reaction S-ubiquitinyl-[E2 ubiquitin-conjugating enzyme]-L-cysteine + [acceptor protein]-L-lysine = [E2 ubiquitin-conjugating enzyme]-L-cysteine + N(6)-ubiquitinyl-[acceptor protein]-L-lysine.. The protein operates within protein modification; protein ubiquitination. This is Putative RING-H2 finger protein ATL35 (ATL35) from Arabidopsis thaliana (Mouse-ear cress).